Here is a 230-residue protein sequence, read N- to C-terminus: UPF0173 metal-dependent hydrolase Dshi_2788 (230 aa).

It belongs to the UPF0173 family.

This is UPF0173 metal-dependent hydrolase Dshi_2788 from Dinoroseobacter shibae (strain DSM 16493 / NCIMB 14021 / DFL 12).